Here is a 490-residue protein sequence, read N- to C-terminus: Bifunctional dihydrocamalexate synthase/camalexin synthase (490 aa).

Residues 1–21 (MSVFLCFLVLLPLILIFLNVL) form a helical membrane-spanning segment.

The protein belongs to the cytochrome P450 family.

The protein resides in the membrane. The enzyme catalyses 2-(L-cystein-S-yl)-2-(1H-indol-3-yl)-acetonitrile + 2 reduced [NADPH--hemoprotein reductase] + 2 O2 = camalexin + hydrogen cyanide + 2 oxidized [NADPH--hemoprotein reductase] + CO2 + 4 H2O + 2 H(+). It carries out the reaction 2-(L-cystein-S-yl)-2-(1H-indol-3-yl)-acetonitrile + reduced [NADPH--hemoprotein reductase] + O2 = (R)-dihydrocamalexate + hydrogen cyanide + oxidized [NADPH--hemoprotein reductase] + 2 H2O + 2 H(+). The catalysed reaction is (R)-dihydrocamalexate + reduced [NADPH--hemoprotein reductase] + O2 = camalexin + oxidized [NADPH--hemoprotein reductase] + CO2 + 2 H2O. Its function is as follows. Multifunctional enzyme involved in the biosynthesis of the indole-derived phytoalexin camalexin. Catalyzes two reactions, the formation of dihydrocamalexate from indole-3-acetonitrile-cysteine conjugate and the oxidative decarboxylation of dihydrocamalexate which is the final step in camalexin biosynthesis. Required for the resistance to the fungal pathogens A.brassicicola, B.cinerea, B.elliptica, B.tulipae, L.maculans and Colletotrichum higginsianum. Seems not to be required for resistance to P.syringae, P.porri, and not involved in age-related resistance. This Arabidopsis thaliana (Mouse-ear cress) protein is Bifunctional dihydrocamalexate synthase/camalexin synthase (CYP71B15).